Here is a 123-residue protein sequence, read N- to C-terminus: UPF0102 protein APP7_1414 (123 aa).

The protein belongs to the UPF0102 family.

The chain is UPF0102 protein APP7_1414 from Actinobacillus pleuropneumoniae serotype 7 (strain AP76).